The chain runs to 170 residues: uncharacterized protein (170 aa).

The 127-residue stretch at 25-151 (PALSPHLVVD…FGHHWSLGQP (127 aa)) folds into the VOC domain.

This is an uncharacterized protein from Mycobacterium tuberculosis (strain CDC 1551 / Oshkosh).